Here is a 103-residue protein sequence, read N- to C-terminus: Regulator of rDNA transcription protein 1 (103 aa).

2 helical membrane passes run 9–33 and 40–57; these read FLPS…WVLV and VAFI…YTFF.

It is found in the membrane. Its function is as follows. Identified in a screen for mutants with decreased levels of rDNA transcription. In Saccharomyces cerevisiae (strain ATCC 204508 / S288c) (Baker's yeast), this protein is Regulator of rDNA transcription protein 1 (RRT1).